The primary structure comprises 287 residues: 33 kDa chaperonin (287 aa).

Cystine bridges form between C233–C235 and C266–C269.

Belongs to the HSP33 family. Under oxidizing conditions two disulfide bonds are formed involving the reactive cysteines. Under reducing conditions zinc is bound to the reactive cysteines and the protein is inactive.

The protein localises to the cytoplasm. Its function is as follows. Redox regulated molecular chaperone. Protects both thermally unfolding and oxidatively damaged proteins from irreversible aggregation. Plays an important role in the bacterial defense system toward oxidative stress. The protein is 33 kDa chaperonin of Thermodesulfovibrio yellowstonii (strain ATCC 51303 / DSM 11347 / YP87).